Here is a 303-residue protein sequence, read N- to C-terminus: Histone deacetylase HDT2 (303 aa).

Acidic residues predominate over residues 100 to 112 (EMDLDSEDEEEEL). Residues 100–282 (EMDLDSEDEE…SGGSVPCKSC (183 aa)) form a disordered region. Basic and acidic residues predominate over residues 119–133 (ENGKADGKEEQKNQE). A compositionally biased stretch (acidic residues) spans 154-203 (DSDDSDEDESDDSDEDDSDDSDEGEGLSPDEGDDDSSDEDDTSDDDEEET). Residues 204–217 (PTPKKPEAGKKRGA) show a composition bias toward basic and acidic residues. The C2H2-type zinc-finger motif lies at 277 to 300 (VPCKSCSKTFNSEMALQAHSKAKH).

Belongs to the histone deacetylase HD2 family. Multimer. Possibly forms a homotrimer with HDT1 and/or HDT3.

Its subcellular location is the nucleus. It localises to the nucleolus. In terms of biological role, mediates the deacetylation of lysine residues on the N-terminal part of the core histones (H2A, H2B, H3 and H4). Histone deacetylation gives a tag for epigenetic repression and plays an important role in transcriptional regulation, cell cycle progression and developmental events. The chain is Histone deacetylase HDT2 (HDT2) from Zea mays (Maize).